We begin with the raw amino-acid sequence, 163 residues long: IQ domain-containing protein F2 (163 aa).

IQ domains are found at residues 42–71 (RVIAAKKIQAWWRGTLVRRTLLHAALSTWI) and 98–127 (RERAVVKLQSLVRMWRIHWRYCQVLNAIYV).

This is IQ domain-containing protein F2 (IQCF2) from Bos taurus (Bovine).